Consider the following 225-residue polypeptide: N-(5'-phosphoribosyl)anthranilate isomerase (225 aa).

This sequence belongs to the TrpF family.

It carries out the reaction N-(5-phospho-beta-D-ribosyl)anthranilate = 1-(2-carboxyphenylamino)-1-deoxy-D-ribulose 5-phosphate. Its pathway is amino-acid biosynthesis; L-tryptophan biosynthesis; L-tryptophan from chorismate: step 3/5. This Nitrobacter winogradskyi (strain ATCC 25391 / DSM 10237 / CIP 104748 / NCIMB 11846 / Nb-255) protein is N-(5'-phosphoribosyl)anthranilate isomerase.